Reading from the N-terminus, the 178-residue chain is Peptide deformylase 2 (178 aa).

2 residues coordinate Fe cation: Cys-101 and His-143. The active site involves Glu-144. His-147 contributes to the Fe cation binding site.

It belongs to the polypeptide deformylase family. The cofactor is Fe(2+).

The catalysed reaction is N-terminal N-formyl-L-methionyl-[peptide] + H2O = N-terminal L-methionyl-[peptide] + formate. Removes the formyl group from the N-terminal Met of newly synthesized proteins. Requires at least a dipeptide for an efficient rate of reaction. N-terminal L-methionine is a prerequisite for activity but the enzyme has broad specificity at other positions. In Pseudomonas putida (strain ATCC 47054 / DSM 6125 / CFBP 8728 / NCIMB 11950 / KT2440), this protein is Peptide deformylase 2.